A 505-amino-acid chain; its full sequence is Zealexin A1 synthase (505 aa).

Residues 7 to 26 (IAVGTVAVVAVLSKLKSAVT) traverse the membrane as a helical segment. Cys442 provides a ligand contact to heme.

It belongs to the cytochrome P450 family. Heme serves as cofactor.

The protein resides in the membrane. It catalyses the reaction (S)-beta-macrocarpene + 3 reduced [NADPH--hemoprotein reductase] + 3 O2 = zealexin A1 + 3 oxidized [NADPH--hemoprotein reductase] + 4 H2O + 4 H(+). Its function is as follows. Involved in production of the antifungal phytoalexin zealexin A1. The enzyme sequentially oxidizes(S)-beta-macrocarpene via alcohol and aldehyde intermediates to form zealexin A1, a maize phytoalexin that provides biochemical protection against fungal infection. This Zea mays (Maize) protein is Zealexin A1 synthase.